Reading from the N-terminus, the 187-residue chain is UPF0301 protein Noc_0368 (187 aa).

It belongs to the UPF0301 (AlgH) family.

The polypeptide is UPF0301 protein Noc_0368 (Nitrosococcus oceani (strain ATCC 19707 / BCRC 17464 / JCM 30415 / NCIMB 11848 / C-107)).